Reading from the N-terminus, the 196-residue chain is MPIGVPKVPFRSPGEEDASWVDVYNRLYRERLLFLGQGINSEISNQLIGLMVYLSIEDETKELYLFINSPGGWVIPGIAIYDTMQFVRPDVHTVCMGLAASMGSFILVGGEITKRLAFPHARVMMHQPASGYYEAQTGEFVLEAEELLKLRETLTRVYVQRTGKPLWVVSEDMEKDVFMSATEAQAYGIVDLVAVE.

The Nucleophile role is filled by Ser101. The active site involves His126.

The protein belongs to the peptidase S14 family. Component of the chloroplastic Clp protease core complex.

It is found in the plastid. It localises to the chloroplast stroma. The enzyme catalyses Hydrolysis of proteins to small peptides in the presence of ATP and magnesium. alpha-casein is the usual test substrate. In the absence of ATP, only oligopeptides shorter than five residues are hydrolyzed (such as succinyl-Leu-Tyr-|-NHMec, and Leu-Tyr-Leu-|-Tyr-Trp, in which cleavage of the -Tyr-|-Leu- and -Tyr-|-Trp bonds also occurs).. In terms of biological role, cleaves peptides in various proteins in a process that requires ATP hydrolysis. Has a chymotrypsin-like activity. Plays a major role in the degradation of misfolded proteins. This Atropa belladonna (Belladonna) protein is ATP-dependent Clp protease proteolytic subunit.